The primary structure comprises 805 residues: ATP-dependent RNA helicase mak-5 (805 aa).

Basic residues predominate over residues 1–10; the sequence is MAVDKKRKNT. 2 disordered regions span residues 1-33 and 79-189; these read MAVD…KRPV and VPKS…ELET. Positions 85-100 are enriched in acidic residues; that stretch reads EVEDDGEEFGGFDDEE. 3 stretches are compositionally biased toward basic and acidic residues: residues 110–119, 126–143, and 164–189; these read QEVKTSETKA, AKEK…EQQK, and KNAE…ELET. Residues 209 to 237 carry the Q motif motif; that stretch reads SEWVPLDLSPRMISSIAKLRFSKPTVIQS. Positions 240–463 constitute a Helicase ATP-binding domain; that stretch reads IPEIMAGHDV…AGKSKFKATS (224 aa). 253–260 is a binding site for ATP; that stretch reads ASTGSGKT. A DEAD box motif is present at residues 372–375; that stretch reads DEAD. A compositionally biased stretch (basic and acidic residues) spans 390-406; that stretch reads FKALDRPPVEENNEDQK. A disordered region spans residues 390-435; the sequence is FKALDRPPVEENNEDQKMGGTDEEGQEEEEEDSEEEEEEEEEHVNK. Positions 410–431 are enriched in acidic residues; the sequence is TDEEGQEEEEEDSEEEEEEEEE. In terms of domain architecture, Helicase C-terminal spans 510 to 666; sequence YLYATLMLQP…NSGNNTKKLV (157 aa). The interval 729-751 is disordered; that stretch reads AGKWGGKGSSKKQKQKEAQQMSK.

Belongs to the DEAD box helicase family. DDX24/MAK5 subfamily.

The protein resides in the nucleus. It localises to the nucleolus. It catalyses the reaction ATP + H2O = ADP + phosphate + H(+). ATP-binding RNA helicase involved in the biogenesis of 60S ribosomal subunits and is required for the normal formation of 25S and 5.8S rRNAs. The polypeptide is ATP-dependent RNA helicase mak-5 (mak-5) (Neurospora crassa (strain ATCC 24698 / 74-OR23-1A / CBS 708.71 / DSM 1257 / FGSC 987)).